Consider the following 212-residue polypeptide: Eukaryotic translation initiation factor 4E-4 (212 aa).

Cys143 and Cys147 are oxidised to a cystine.

The protein belongs to the eukaryotic initiation factor 4E family. As to quaternary structure, eIF4F is a multi-subunit complex, the composition of which varies with external and internal environmental conditions. It is composed of at least eIF4A, eIF4E and eIF4G. eIF4E is also known to interact with other partners. Enriched in somatic cells.

In terms of biological role, recognizes and binds the 7-methylguanosine-containing mRNA cap during an early step in the initiation of protein synthesis and facilitates ribosome binding by inducing the unwinding of the mRNAs secondary structures. All 5 eIF4E proteins bind monomethyl cap structures. Only ife-1, ife-2 and ife-5 bind trimethyl cap structures which result from trans-splicing. Translation of trimethyl cap structure mRNAs may be regulated by intracellular redox state; disulfide bonds change the width and depth of the cap-binding cavity determining selectivity to mRNA caps. The polypeptide is Eukaryotic translation initiation factor 4E-4 (ife-4) (Caenorhabditis elegans).